Here is a 20-residue protein sequence, read N- to C-terminus: Hongotoxin-5 (20 aa).

It belongs to the short scorpion toxin superfamily. Potassium channel inhibitor family. Alpha-KTx 02 subfamily. Expressed by the venom gland.

Its subcellular location is the secreted. Its function is as follows. Potent selective inhibitor of Kv1/KCNA voltage-gated potassium channels. This Centruroides limbatus (Bark scorpion) protein is Hongotoxin-5.